Reading from the N-terminus, the 207-residue chain is Large ribosomal subunit protein uL3 (207 aa).

Positions 129 to 152 (AGGPAGHGSRFQRHPGSIGSNTTP) are disordered.

It belongs to the universal ribosomal protein uL3 family. In terms of assembly, part of the 50S ribosomal subunit. Forms a cluster with proteins L14 and L19.

Functionally, one of the primary rRNA binding proteins, it binds directly near the 3'-end of the 23S rRNA, where it nucleates assembly of the 50S subunit. The protein is Large ribosomal subunit protein uL3 of Leptospira biflexa serovar Patoc (strain Patoc 1 / ATCC 23582 / Paris).